The following is a 154-amino-acid chain: Myoglobin (154 aa).

The Globin domain occupies G2 to K148. A Phosphoserine modification is found at S4. Nitrite is bound at residue H65. Residue H65 coordinates O2. At T68 the chain carries Phosphothreonine. Residue H94 participates in heme b binding.

This sequence belongs to the globin family. Monomeric.

It localises to the cytoplasm. It is found in the sarcoplasm. It catalyses the reaction Fe(III)-heme b-[protein] + nitric oxide + H2O = Fe(II)-heme b-[protein] + nitrite + 2 H(+). The enzyme catalyses H2O2 + AH2 = A + 2 H2O. Functionally, monomeric heme protein which primary function is to store oxygen and facilitate its diffusion within muscle tissues. Reversibly binds oxygen through a pentacoordinated heme iron and enables its timely and efficient release as needed during periods of heightened demand. Depending on the oxidative conditions of tissues and cells, and in addition to its ability to bind oxygen, it also has a nitrite reductase activity whereby it regulates the production of bioactive nitric oxide. Under stress conditions, like hypoxia and anoxia, it also protects cells against reactive oxygen species thanks to its pseudoperoxidase activity. The protein is Myoglobin (MB) of Mesoplodon carlhubbsi (Hubb's beaked whale).